The primary structure comprises 223 residues: Large ribosomal subunit protein uL6c (223 aa).

A chloroplast-targeting transit peptide spans 1 to 41; sequence MASSLVSSFQPRSAFLGDRNVFKVSSTPFAQVGYSSKTIEC.

This sequence belongs to the universal ribosomal protein uL6 family. Part of the 50S ribosomal subunit.

It is found in the plastid. The protein localises to the chloroplast. This protein binds directly to 23S ribosomal RNA and is located at the aminoacyl-tRNA binding site of the peptidyltransferase center. This chain is Large ribosomal subunit protein uL6c (RPL6), found in Arabidopsis thaliana (Mouse-ear cress).